A 446-amino-acid polypeptide reads, in one-letter code: Minor fimbrium tip subunit Mfa3 (446 aa).

The first 20 residues, 1 to 20, serve as a signal peptide directing secretion; sequence MMQLKKRYFALILLLFLWSG. A lipid anchor (N-palmitoyl cysteine) is attached at C21. The S-diacylglycerol cysteine moiety is linked to residue C21. The propeptide occupies 21-43; it reads CDRGVDPQPDPLQPDVYLLVNAR.

This sequence belongs to the bacteroidetes fimbrillin superfamily. FimB/Mfa2 family. In terms of assembly, component of the fimbrium tip. Minor fimbriae are composed of a structural subunit, most often Mfa1, and the accessory subunits Mfa3, Mfa4 and Mfa5. Fimbrium assembly occurs by linear, head-to-tail oligomerization of fimbrial subunits. This is mediated via insertion of a C-terminal beta-strand from one subunit into a groove in the N-terminal domain of the following subunit. Mfa3 is required for Mfa4 and Mfa5 insertion into the fimbrium.

It is found in the fimbrium. It localises to the cell outer membrane. Its function is as follows. Tip subunit of the minor fimbriae. These filamentous pili are attached to the cell surface; they mediate biofilm formation, adhesion onto host cells and onto other bacteria that are part of the oral microbiome. They play an important role in invasion of periodontal tissues and are recognized as major virulence factors. Fimbrium subunits from different strains have highly divergent sequences, and this correlates with pathogenicity. This chain is Minor fimbrium tip subunit Mfa3 (mfa3), found in Porphyromonas gingivalis (strain ATCC 33277 / DSM 20709 / CIP 103683 / JCM 12257 / NCTC 11834 / 2561).